A 311-amino-acid chain; its full sequence is tRNA-cytidine(32) 2-sulfurtransferase (311 aa).

The PP-loop motif signature appears at 47–52; it reads SGGKDS. [4Fe-4S] cluster contacts are provided by C122, C125, and C213.

It belongs to the TtcA family. In terms of assembly, homodimer. Mg(2+) is required as a cofactor. The cofactor is [4Fe-4S] cluster.

The protein localises to the cytoplasm. It carries out the reaction cytidine(32) in tRNA + S-sulfanyl-L-cysteinyl-[cysteine desulfurase] + AH2 + ATP = 2-thiocytidine(32) in tRNA + L-cysteinyl-[cysteine desulfurase] + A + AMP + diphosphate + H(+). The protein operates within tRNA modification. Catalyzes the ATP-dependent 2-thiolation of cytidine in position 32 of tRNA, to form 2-thiocytidine (s(2)C32). The sulfur atoms are provided by the cysteine/cysteine desulfurase (IscS) system. The protein is tRNA-cytidine(32) 2-sulfurtransferase of Escherichia coli (strain SMS-3-5 / SECEC).